A 309-amino-acid polypeptide reads, in one-letter code: Taste receptor type 2 member 8 (309 aa).

Topologically, residues 1–7 (MFSPADN) are extracellular. Residues 8–28 (IFIILITGEFILGILGNGYIA) form a helical membrane-spanning segment. The Cytoplasmic segment spans residues 29 to 50 (LVNWIDWIKKKKISTIDYILTN). The chain crosses the membrane as a helical span at residues 51 to 71 (LVISRICLISVMVVNGIVIAV). The Extracellular portion of the chain corresponds to 72 to 82 (YPDVYTKSKLQ). Residues 83–103 (IAICTFWTFANYLNMWITTCL) traverse the membrane as a helical segment. The Cytoplasmic portion of the chain corresponds to 104 to 131 (NVFYFLKIANSSHPLFLWLKQKIDMVVR). The chain crosses the membrane as a helical span at residues 132–152 (WILLGCFAISLLVSLIAAIVL). At 153-184 (SYDYRFHAIAKHKRNITEMFHVSKRPYFEPLT) the chain is on the extracellular side. N-linked (GlcNAc...) asparagine glycosylation occurs at N167. Residues 185 to 205 (LFNLFAIVPFIVSLISFFLLV) traverse the membrane as a helical segment. Residues 206-239 (RSLWRHTKQIKLYATGGRDPSTEVHVRAIKTMTS) lie on the Cytoplasmic side of the membrane. Residues 240-260 (FIFLFFLYYISSILVTFSYLM) traverse the membrane as a helical segment. The Extracellular portion of the chain corresponds to 261-266 (TKYKLA). A helical transmembrane segment spans residues 267-287 (VEFGEIVAILYPLGHSLILIV). Residues 288-309 (LNNKLRQTFVRMLTCRKIACVI) are Cytoplasmic-facing.

Belongs to the G-protein coupled receptor T2R family.

It localises to the membrane. Functionally, receptor that may play a role in the perception of bitterness and is gustducin-linked. May play a role in sensing the chemical composition of the gastrointestinal content. The activity of this receptor may stimulate alpha gustducin, mediate PLC-beta-2 activation and lead to the gating of TRPM5. This Gorilla gorilla gorilla (Western lowland gorilla) protein is Taste receptor type 2 member 8 (TAS2R8).